The primary structure comprises 317 residues: 2,3-dihydroxyphenylpropionate/2,3-dihydroxicinnamic acid 1,2-dioxygenase (317 aa).

H115 acts as the Proton donor in catalysis. The active-site Proton acceptor is H179.

Belongs to the LigB/MhpB extradiol dioxygenase family. Homotetramer. The cofactor is Fe(2+).

The enzyme catalyses 3-(2,3-dihydroxyphenyl)propanoate + O2 = (2Z,4E)-2-hydroxy-6-oxonona-2,4-dienedioate + H(+). It catalyses the reaction (2E)-3-(2,3-dihydroxyphenyl)prop-2-enoate + O2 = (2Z,4E,7E)-2-hydroxy-6-oxonona-2,4,7-trienedioate + H(+). It participates in aromatic compound metabolism; 3-phenylpropanoate degradation. Its function is as follows. Catalyzes the non-heme iron(II)-dependent oxidative cleavage of 2,3-dihydroxyphenylpropionic acid and 2,3-dihydroxicinnamic acid into 2-hydroxy-6-ketononadienedioate and 2-hydroxy-6-ketononatrienedioate, respectively. The chain is 2,3-dihydroxyphenylpropionate/2,3-dihydroxicinnamic acid 1,2-dioxygenase from Photorhabdus laumondii subsp. laumondii (strain DSM 15139 / CIP 105565 / TT01) (Photorhabdus luminescens subsp. laumondii).